A 372-amino-acid chain; its full sequence is Sulfate/thiosulfate import ATP-binding protein CysA (372 aa).

An ABC transporter domain is found at 3-237; that stretch reads IQVQHVTKRF…PATPFVYGFL (235 aa). 35–42 provides a ligand contact to ATP; sequence GPSGCGKT.

Belongs to the ABC transporter superfamily. Sulfate/tungstate importer (TC 3.A.1.6) family. The complex is composed of two ATP-binding proteins (CysA), two transmembrane proteins (CysT and CysW) and a solute-binding protein (CysP).

The protein resides in the cell inner membrane. It catalyses the reaction sulfate(out) + ATP + H2O = sulfate(in) + ADP + phosphate + H(+). The catalysed reaction is thiosulfate(out) + ATP + H2O = thiosulfate(in) + ADP + phosphate + H(+). In terms of biological role, part of the ABC transporter complex CysAWTP involved in sulfate/thiosulfate import. Responsible for energy coupling to the transport system. The sequence is that of Sulfate/thiosulfate import ATP-binding protein CysA from Ralstonia nicotianae (strain ATCC BAA-1114 / GMI1000) (Ralstonia solanacearum).